Reading from the N-terminus, the 300-residue chain is Meiotically up-regulated gene 165 protein (300 aa).

Disordered regions lie at residues 1–38 (MLEKGEHIEYPNTPPLHSPPESHTFSSQTDDSYFHKPS) and 50–109 (TNSS…STLE). Polar residues predominate over residues 21–38 (ESHTFSSQTDDSYFHKPS). Residues 52-69 (SSVPSASRSPESIASSQS) are compositionally biased toward low complexity. Basic residues predominate over residues 94 to 103 (TLRKRGRKPK).

The protein localises to the nucleus. Has a role in meiosis. The protein is Meiotically up-regulated gene 165 protein (mug165) of Schizosaccharomyces pombe (strain 972 / ATCC 24843) (Fission yeast).